Consider the following 88-residue polypeptide: Large ribosomal subunit protein bL27 (88 aa).

The segment at 1 to 24 (MAHKKGTGSTRNGRDSNSKRLGVK) is disordered.

The protein belongs to the bacterial ribosomal protein bL27 family.

The chain is Large ribosomal subunit protein bL27 from Synechococcus sp. (strain CC9311).